We begin with the raw amino-acid sequence, 31 residues long: Cycloviolacin-O19 (31 aa).

The cyclopeptide (Gly-Asp) cross-link spans 1–31; that stretch reads GTLPCGESCVWIPCISSVVGCSCKSKVCYKD. Intrachain disulfides connect Cys5–Cys21, Cys9–Cys23, and Cys14–Cys28.

In terms of processing, this is a cyclic peptide. As to expression, expressed in petioles and runners but not in leaves, petals and roots (at protein level).

Its function is as follows. Probably participates in a plant defense mechanism. In Viola odorata (Sweet violet), this protein is Cycloviolacin-O19.